Consider the following 156-residue polypeptide: Small ribosomal subunit protein uS7 (156 aa).

Belongs to the universal ribosomal protein uS7 family. Part of the 30S ribosomal subunit. Contacts proteins S9 and S11.

One of the primary rRNA binding proteins, it binds directly to 16S rRNA where it nucleates assembly of the head domain of the 30S subunit. Is located at the subunit interface close to the decoding center, probably blocks exit of the E-site tRNA. The polypeptide is Small ribosomal subunit protein uS7 (Metamycoplasma arthritidis (strain 158L3-1) (Mycoplasma arthritidis)).